Reading from the N-terminus, the 639-residue chain is Chaperone protein HtpG (639 aa).

The interval 1-347 (MSQQETHGFQ…SNDLPLNVSR (347 aa)) is a; substrate-binding. The segment at 348–564 (EILQDNKVTT…EGEMSTQMIK (217 aa)) is b. Positions 565–639 (LMQAAGQDVP…MNQMLLASVK (75 aa)) are c.

It belongs to the heat shock protein 90 family. Homodimer.

The protein resides in the cytoplasm. Molecular chaperone. Has ATPase activity. The chain is Chaperone protein HtpG from Shewanella halifaxensis (strain HAW-EB4).